Reading from the N-terminus, the 239-residue chain is 2,3,4,5-tetrahydropyridine-2,6-dicarboxylate N-acetyltransferase (239 aa).

Belongs to the transferase hexapeptide repeat family. DapH subfamily.

The enzyme catalyses (S)-2,3,4,5-tetrahydrodipicolinate + acetyl-CoA + H2O = L-2-acetamido-6-oxoheptanedioate + CoA. The protein operates within amino-acid biosynthesis; L-lysine biosynthesis via DAP pathway; LL-2,6-diaminopimelate from (S)-tetrahydrodipicolinate (acetylase route): step 1/3. Its function is as follows. Catalyzes the transfer of an acetyl group from acetyl-CoA to tetrahydrodipicolinate. In Staphylococcus aureus (strain bovine RF122 / ET3-1), this protein is 2,3,4,5-tetrahydropyridine-2,6-dicarboxylate N-acetyltransferase.